The following is a 767-amino-acid chain: Tetratricopeptide repeat protein 16 (767 aa).

TPR repeat units lie at residues 18-51, 53-85, 93-126, 128-155, 208-241, 242-275, 288-321, 322-355, and 363-396; these read VREYYNQGHQCLLQEDWEMSVLFFSRALHLDPKL, DFYVFRAEAFIQLCDFSSALQNLRRAYSYDPGN, AFVLYLQGQCLYELCDFQEALCVFLQASDLQPQN, SFSYRCMACLLALKRYHDCLALITREVK, AKQSLQDASTLAVQGKVHRALKCINCAIENNPLD, PNFFFFRGTLRRRLQQFDHAVEDFLKAMDMVTDT, LLTYNDFAVHCYNHGAYQEGVLLLNKAIRDEQNE, KGLYINRGDCFFQLGNLAFAEADYKQALALSPLD, and GVLQEKLGFCQQKHRQFQTAEEHFSEAIRHSPQK. A disordered region spans residues 612–733; it reads EVTPAYGQRD…DSLSFSEISS (122 aa). Residues 684–718 show a composition bias toward polar residues; that stretch reads QRSSQKVTKTPSLTHSTTHSDIGESANDTPGQTPW.

The sequence is that of Tetratricopeptide repeat protein 16 (Ttc16) from Mus musculus (Mouse).